We begin with the raw amino-acid sequence, 95 residues long: Protein TusB (95 aa).

This sequence belongs to the DsrH/TusB family. Heterohexamer, formed by a dimer of trimers. The hexameric TusBCD complex contains 2 copies each of TusB, TusC and TusD. The TusBCD complex interacts with TusE.

It is found in the cytoplasm. In terms of biological role, part of a sulfur-relay system required for 2-thiolation of 5-methylaminomethyl-2-thiouridine (mnm(5)s(2)U) at tRNA wobble positions. This is Protein TusB from Salmonella dublin (strain CT_02021853).